A 322-amino-acid polypeptide reads, in one-letter code: Ornithine carbamoyltransferase (322 aa).

Carbamoyl phosphate is bound by residues 67–70, Gln-94, Arg-118, and 145–148; these read STRT and HPCQ. L-ornithine-binding positions include Asn-176, Asp-240, and 244–245; that span reads SM. Carbamoyl phosphate is bound by residues 280 to 281 and Arg-308; that span reads CL.

Belongs to the aspartate/ornithine carbamoyltransferase superfamily. OTCase family.

The protein resides in the cytoplasm. The catalysed reaction is carbamoyl phosphate + L-ornithine = L-citrulline + phosphate + H(+). Its pathway is amino-acid biosynthesis; L-arginine biosynthesis; L-arginine from L-ornithine and carbamoyl phosphate: step 1/3. Reversibly catalyzes the transfer of the carbamoyl group from carbamoyl phosphate (CP) to the N(epsilon) atom of ornithine (ORN) to produce L-citrulline. The chain is Ornithine carbamoyltransferase from Oceanobacillus iheyensis (strain DSM 14371 / CIP 107618 / JCM 11309 / KCTC 3954 / HTE831).